A 344-amino-acid polypeptide reads, in one-letter code: Dihydroorotate dehydrogenase (quinone) (344 aa).

FMN-binding positions include 65–69 (AGLDK) and threonine 89. Residue lysine 69 coordinates substrate. 114–118 (NRMGF) is a substrate binding site. Positions 145 and 178 each coordinate FMN. A substrate-binding site is contributed by asparagine 178. Serine 181 acts as the Nucleophile in catalysis. Residue asparagine 183 participates in substrate binding. FMN is bound by residues lysine 223 and threonine 251. 252-253 (NT) is a substrate binding site. FMN-binding positions include glycine 274, glycine 303, and 324–325 (YT).

The protein belongs to the dihydroorotate dehydrogenase family. Type 2 subfamily. In terms of assembly, monomer. It depends on FMN as a cofactor.

Its subcellular location is the cell membrane. The catalysed reaction is (S)-dihydroorotate + a quinone = orotate + a quinol. It participates in pyrimidine metabolism; UMP biosynthesis via de novo pathway; orotate from (S)-dihydroorotate (quinone route): step 1/1. Its function is as follows. Catalyzes the conversion of dihydroorotate to orotate with quinone as electron acceptor. This Ralstonia nicotianae (strain ATCC BAA-1114 / GMI1000) (Ralstonia solanacearum) protein is Dihydroorotate dehydrogenase (quinone).